Consider the following 253-residue polypeptide: Vitamin B12 import ATP-binding protein BtuD (253 aa).

In terms of domain architecture, ABC transporter spans 4 to 236 (LQLNNVSVGT…DVLSQVFEVD (233 aa)). 32–39 (GPNGAGKS) contributes to the ATP binding site.

It belongs to the ABC transporter superfamily. Vitamin B12 importer (TC 3.A.1.13.1) family. As to quaternary structure, the complex is composed of two ATP-binding proteins (BtuD), two transmembrane proteins (BtuC) and a solute-binding protein (BtuF).

The protein localises to the cell inner membrane. The catalysed reaction is an R-cob(III)alamin(out) + ATP + H2O = an R-cob(III)alamin(in) + ADP + phosphate + H(+). In terms of biological role, part of the ABC transporter complex BtuCDF involved in vitamin B12 import. Responsible for energy coupling to the transport system. The polypeptide is Vitamin B12 import ATP-binding protein BtuD (Yersinia pestis).